The chain runs to 379 residues: Chaperone protein DnaJ (379 aa).

The region spanning 5 to 70 is the J domain; that stretch reads DYYETLGCDR…QKRAAYDRFG (66 aa). A CR-type zinc finger spans residues 134–212; sequence GKTAQIKIPT…CGGAGRVTRE (79 aa). Positions 147, 150, 164, 167, 186, 189, 200, and 203 each coordinate Zn(2+). CXXCXGXG motif repeat units lie at residues 147–154, 164–171, 186–193, and 200–207; these read CETCSGTG, CRMCGGAG, CPNCQGRG, and CSDCGGAG.

The protein belongs to the DnaJ family. Homodimer. Requires Zn(2+) as cofactor.

Its subcellular location is the cytoplasm. In terms of biological role, participates actively in the response to hyperosmotic and heat shock by preventing the aggregation of stress-denatured proteins and by disaggregating proteins, also in an autonomous, DnaK-independent fashion. Unfolded proteins bind initially to DnaJ; upon interaction with the DnaJ-bound protein, DnaK hydrolyzes its bound ATP, resulting in the formation of a stable complex. GrpE releases ADP from DnaK; ATP binding to DnaK triggers the release of the substrate protein, thus completing the reaction cycle. Several rounds of ATP-dependent interactions between DnaJ, DnaK and GrpE are required for fully efficient folding. Also involved, together with DnaK and GrpE, in the DNA replication of plasmids through activation of initiation proteins. In Xanthobacter autotrophicus (strain ATCC BAA-1158 / Py2), this protein is Chaperone protein DnaJ.